A 510-amino-acid chain; its full sequence is NAD(P)H-quinone oxidoreductase subunit 2 B, chloroplastic (510 aa).

A run of 13 helical transmembrane segments spans residues 24 to 44, 57 to 77, 99 to 119, 124 to 144, 150 to 170, 183 to 203, 227 to 247, 295 to 315, 323 to 343, 347 to 367, 395 to 415, 418 to 438, and 484 to 504; these read LLLF…GLIL, IPWL…ALLF, IFQF…VEYI, MAIT…MFLC, ITIF…SGYT, YLLM…WLYG, PGIS…LSPA, WHLL…LIAI, MLAY…IVGD, GYAS…GTFA, ALSS…AGFF, LHLF…IGLL, and MIVC…IIAI.

The protein belongs to the complex I subunit 2 family. In terms of assembly, NDH is composed of at least 16 different subunits, 5 of which are encoded in the nucleus.

The protein resides in the plastid. It localises to the chloroplast thylakoid membrane. The catalysed reaction is a plastoquinone + NADH + (n+1) H(+)(in) = a plastoquinol + NAD(+) + n H(+)(out). It catalyses the reaction a plastoquinone + NADPH + (n+1) H(+)(in) = a plastoquinol + NADP(+) + n H(+)(out). In terms of biological role, NDH shuttles electrons from NAD(P)H:plastoquinone, via FMN and iron-sulfur (Fe-S) centers, to quinones in the photosynthetic chain and possibly in a chloroplast respiratory chain. The immediate electron acceptor for the enzyme in this species is believed to be plastoquinone. Couples the redox reaction to proton translocation, and thus conserves the redox energy in a proton gradient. The sequence is that of NAD(P)H-quinone oxidoreductase subunit 2 B, chloroplastic from Chloranthus spicatus (Chulantree).